The primary structure comprises 646 residues: uncharacterized protein (646 aa).

Helical transmembrane passes span 20-42 (ILSR…LYLL), 55-77 (FLAG…IHQV), 97-115 (LLHF…HYML), 127-149 (YTFD…FSYW), 159-181 (IAFV…FFKL), 188-206 (ILLG…LLLA), 216-238 (YGAV…YHLF), and 251-273 (WVTM…IGTA).

Its subcellular location is the cell membrane. This is an uncharacterized protein from Bacillus subtilis (strain 168).